The following is a 154-amino-acid chain: Neurotrophin-3 (154 aa).

The signal sequence occupies residues 1-18 (MSILFYVMFLAYLRGVQG). A propeptide spanning residues 19–134 (NSMDQRSLPE…VNSRSPRRKR (116 aa)) is cleaved from the precursor.

It belongs to the NGF-beta family.

Its subcellular location is the secreted. In terms of biological role, seems to promote the survival of visceral and proprioceptive sensory neurons. This Cervus elaphus (Red deer) protein is Neurotrophin-3 (NTF3).